The primary structure comprises 320 residues: Minor outer capsid protein P9 (320 aa).

A disordered region spans residues 297–320 (RNDDEEELAGSEFTSLLSDDGRMG).

The protein belongs to the phytoreovirus minor outer capsid protein P9 family.

It is found in the virion. The protein localises to the host cytoplasm. Functionally, minor outer capsid protein. This is Minor outer capsid protein P9 from Rice gall dwarf virus (RGDV).